The primary structure comprises 449 residues: MARRARRPRGRFYAFRRGRWHHLKRLRRRYKFRHRRRQRYRRRAFRKAFHNPRPGTYSVRLPNPQSTMTIRFQGVIFLTEGLILPKNSTAGGYADHMYGARVAKISVNLKEFLLASMNLTYVSKIGGPIAGELIADGSKSQAAENWPNCWLPLDNNVPSATPSAWWRWALMMMQPTDSCRFFNHPKQMTLQDMGRMFGGWHLFRHIETRFQLLATKNEGSFSPVASLLSQGEYLTRRDDVKYSSDHQNRWRKGEQPMTGGIAYATGKMRLDEQQYPAMPPDPPIITTTTAQGTQVRCMNSTQAWWSWDTYMSFATLTALGAQWSFPPGQRSVSRRSFNHHKARGAGDPKGQRWHTLVPLGTETITDSYMRAPASELDTNFFTLYVAQGTNKSQQYKFGTATYALKEPVMKSDSWAVVRVQSVWQLGNRQRPYPWDVNWANSTMYWGSQP.

The DNA-binding stretch occupies residues 1 to 43; that stretch reads MARRARRPRGRFYAFRRGRWHHLKRLRRRYKFRHRRRQRYRRR. The segment at 6–47 is nuclear localization signals; that stretch reads RRPRGRFYAFRRGRWHHLKRLRRRYKFRHRRRQRYRRRAFRK.

Belongs to the gyrovirus capsid protein family. As to quaternary structure, homomultimer (Potential). Interacts with Rep; this interaction relocates Rep into the nucleus.

It is found in the host nucleus. It localises to the virion. Self-assembles to form the virion icosahedral capsid with a T=1 symmetry. This very small capsid (25 nm in diameter) allows the virus to be very stable in the environment and resistant to some disinfectants, including detergents. Essential for the initial attachment to host receptors. After attachment, the virus is endocytosed and traffics to the nucleus. The capsid protein binds and transports the viral genome and Rep across the nuclear envelope. This Gallus gallus (Chicken) protein is Capsid protein (VP1).